A 255-amino-acid chain; its full sequence is Probable transcriptional regulatory protein CMM_1817 (255 aa).

It belongs to the TACO1 family.

The protein resides in the cytoplasm. The sequence is that of Probable transcriptional regulatory protein CMM_1817 from Clavibacter michiganensis subsp. michiganensis (strain NCPPB 382).